Here is a 79-residue protein sequence, read N- to C-terminus: Eumenine mastoparan-OD (79 aa).

Residues Met1–Ala24 form the signal peptide. 5 AXPX repeats span residues Ala24 to Leu27, Ala30 to Ala33, Ala44 to Ile47, Ala52 to Glu55, and Ala58 to Glu61. Positions Glu25–Ala62 are excised as a propeptide. At Leu76 the chain carries Leucine amide.

As to expression, expressed by the venom gland.

Its subcellular location is the secreted. It is found in the target cell membrane. In terms of biological role, antimicrobial peptide with strong activity against the fungi C.albicans (MIC=6 uM) and B.cinerea (MIC=10 uM), and weaker activity against the Gram-negative bacterium E.coli (MIC=97 uM) and Gram-positive bacterium S.aureus (MIC=97 uM). Shows cytolytic activity against insect cell lines. Has potent hemolytic activity against ovine erythrocytes (80% at 50 uM), but has no hemolytic activity against human erythrocytes. In vivo, peptide injection in the vicinity of the head and thorax of lepidopteran larvae induces feeding disorder that lasts one or two days before recovering. This is Eumenine mastoparan-OD from Orancistrocerus drewseni (Solitary wasp).